Reading from the N-terminus, the 401-residue chain is 1-deoxy-D-xylulose 5-phosphate reductoisomerase (401 aa).

Residues T11, G12, S13, I14, R38, N39, and N125 each coordinate NADPH. K126 lines the 1-deoxy-D-xylulose 5-phosphate pocket. E127 lines the NADPH pocket. D151 lines the Mn(2+) pocket. 1-deoxy-D-xylulose 5-phosphate contacts are provided by S152, E153, S179, and H202. Mn(2+) is bound at residue E153. Residue G208 coordinates NADPH. 1-deoxy-D-xylulose 5-phosphate is bound by residues S215, N220, K221, and E224. A Mn(2+)-binding site is contributed by E224.

Belongs to the DXR family. Mg(2+) serves as cofactor. Mn(2+) is required as a cofactor.

The catalysed reaction is 2-C-methyl-D-erythritol 4-phosphate + NADP(+) = 1-deoxy-D-xylulose 5-phosphate + NADPH + H(+). The protein operates within isoprenoid biosynthesis; isopentenyl diphosphate biosynthesis via DXP pathway; isopentenyl diphosphate from 1-deoxy-D-xylulose 5-phosphate: step 1/6. In terms of biological role, catalyzes the NADPH-dependent rearrangement and reduction of 1-deoxy-D-xylulose-5-phosphate (DXP) to 2-C-methyl-D-erythritol 4-phosphate (MEP). This chain is 1-deoxy-D-xylulose 5-phosphate reductoisomerase, found in Paraburkholderia phytofirmans (strain DSM 17436 / LMG 22146 / PsJN) (Burkholderia phytofirmans).